Reading from the N-terminus, the 699-residue chain is Macoilin-2 (699 aa).

The next 4 membrane-spanning stretches (helical) occupy residues 28 to 48 (TFLYLKFLVVWALVLLADFVL), 75 to 95 (AFSVFFVCVAFTSDIICLLFI), 120 to 140 (VCLPTVSLWILFVYIEAAIRF), and 154 to 174 (FAAHCIGYPVVTLGFGFKSYV). Disordered regions lie at residues 219–289 (AAAA…SILP), 322–411 (LLKD…PNNQ), 432–451 (LQASRQTEQDLRSQLGSLGT), and 679–699 (FMDTSPSGLDPNASVYQPLKK). N-linked (GlcNAc...) asparagine glycosylation is found at asparagine 241, asparagine 267, asparagine 345, and asparagine 365. The span at 257–271 (LEYREKERGKNESKK) shows a compositional bias: basic and acidic residues. Positions 329 to 346 (SSSSSSTSSNSNKNYKNA) are enriched in low complexity. The span at 366 to 382 (GSVPSSSGPSSSASSSS) shows a compositional bias: low complexity. The N-linked (GlcNAc...) asparagine glycan is linked to asparagine 690.

Belongs to the macoilin family.

The protein localises to the nucleus membrane. The protein resides in the cell projection. It localises to the axon. Its subcellular location is the rough endoplasmic reticulum membrane. In terms of biological role, may play a role in the regulation of neuronal activity. This is Macoilin-2 from Danio rerio (Zebrafish).